A 1074-amino-acid polypeptide reads, in one-letter code: DNA-directed RNA polymerase subunit beta (1074 aa).

The protein belongs to the RNA polymerase beta chain family. In terms of assembly, in plastids the minimal PEP RNA polymerase catalytic core is composed of four subunits: alpha, beta, beta', and beta''. When a (nuclear-encoded) sigma factor is associated with the core the holoenzyme is formed, which can initiate transcription.

The protein resides in the plastid. It localises to the chloroplast. The catalysed reaction is RNA(n) + a ribonucleoside 5'-triphosphate = RNA(n+1) + diphosphate. DNA-dependent RNA polymerase catalyzes the transcription of DNA into RNA using the four ribonucleoside triphosphates as substrates. The polypeptide is DNA-directed RNA polymerase subunit beta (Chara vulgaris (Common stonewort)).